Consider the following 118-residue polypeptide: Myotrophin (118 aa).

Cys-2 carries the N-acetylcysteine modification. Residues 2 to 30 form an ANK 1 repeat; sequence CDKEFMWALKNGDLDEVKDYVAKGEDVNR. An N6-acetyllysine mark is found at Lys-4, Lys-11, and Lys-24. Thr-31 carries the phosphothreonine modification. ANK repeat units lie at residues 34–66 and 67–99; these read GGRKPLHYAADCGQLEILEFLLLKGADINAPDK and HHITPLLSAVYEGHVSCVKLLLSKGADKTVKGP.

This sequence belongs to the myotrophin family. As to quaternary structure, interacts with RELA. Interacts with the heterodimer formed by CAPZA1 and CAPZB.

It is found in the cytoplasm. The protein resides in the nucleus. The protein localises to the perinuclear region. Functionally, promotes dimerization of NF-kappa-B subunits and regulates NF-kappa-B transcription factor activity. Promotes growth of cardiomyocytes, but not cardiomyocyte proliferation. Promotes cardiac muscle hypertrophy. Plays a role in the regulation of the growth of actin filaments. Inhibits the activity of the F-actin-capping protein complex formed by the CAPZA1 and CAPZB heterodimer. In Bos taurus (Bovine), this protein is Myotrophin (MTPN).